The sequence spans 911 residues: Protein translocase subunit SecA (911 aa).

Residues Gln-86, 104–108, and Asp-512 contribute to the ATP site; that span reads GEGKT. Positions 869-888 are disordered; it reads ALADDGQPQGAQPVRNVLPK. Zn(2+) is bound by residues Cys-895, Cys-897, Cys-906, and His-907.

The protein belongs to the SecA family. In terms of assembly, monomer and homodimer. Part of the essential Sec protein translocation apparatus which comprises SecA, SecYEG and auxiliary proteins SecDF-YajC and YidC. The cofactor is Zn(2+).

The protein localises to the cell inner membrane. It localises to the cytoplasm. It carries out the reaction ATP + H2O + cellular proteinSide 1 = ADP + phosphate + cellular proteinSide 2.. Part of the Sec protein translocase complex. Interacts with the SecYEG preprotein conducting channel. Has a central role in coupling the hydrolysis of ATP to the transfer of proteins into and across the cell membrane, serving both as a receptor for the preprotein-SecB complex and as an ATP-driven molecular motor driving the stepwise translocation of polypeptide chains across the membrane. In Bordetella parapertussis (strain 12822 / ATCC BAA-587 / NCTC 13253), this protein is Protein translocase subunit SecA.